A 29-amino-acid chain; its full sequence is Cyclotide vibi-B (29 aa).

The segment at residues 1–29 (GLPVCGETCFGGTCNTPGCTCSYPICTRN) is a cross-link (cyclopeptide (Gly-Asn)). Disulfide bonds link Cys-5–Cys-19, Cys-9–Cys-21, and Cys-14–Cys-26.

This is a cyclic peptide.

Its function is as follows. Probably participates in a plant defense mechanism. The chain is Cyclotide vibi-B from Viola biflora (Yellow wood violet).